The primary structure comprises 365 residues: 2-aminoethylphosphonate--pyruvate transaminase (365 aa).

N6-(pyridoxal phosphate)lysine is present on Lys194.

This sequence belongs to the class-V pyridoxal-phosphate-dependent aminotransferase family. PhnW subfamily. As to quaternary structure, homodimer. The cofactor is pyridoxal 5'-phosphate.

It catalyses the reaction (2-aminoethyl)phosphonate + pyruvate = phosphonoacetaldehyde + L-alanine. Involved in phosphonate degradation. The polypeptide is 2-aminoethylphosphonate--pyruvate transaminase (Bacillus cytotoxicus (strain DSM 22905 / CIP 110041 / 391-98 / NVH 391-98)).